A 300-amino-acid polypeptide reads, in one-letter code: 4-hydroxy-tetrahydrodipicolinate synthase (300 aa).

Thr46 is a pyruvate binding site. Catalysis depends on Tyr134, which acts as the Proton donor/acceptor. Lys162 serves as the catalytic Schiff-base intermediate with substrate. Position 204 (Val204) interacts with pyruvate.

Belongs to the DapA family. As to quaternary structure, homotetramer; dimer of dimers.

It localises to the cytoplasm. The catalysed reaction is L-aspartate 4-semialdehyde + pyruvate = (2S,4S)-4-hydroxy-2,3,4,5-tetrahydrodipicolinate + H2O + H(+). The protein operates within amino-acid biosynthesis; L-lysine biosynthesis via DAP pathway; (S)-tetrahydrodipicolinate from L-aspartate: step 3/4. Its function is as follows. Catalyzes the condensation of (S)-aspartate-beta-semialdehyde [(S)-ASA] and pyruvate to 4-hydroxy-tetrahydrodipicolinate (HTPA). The chain is 4-hydroxy-tetrahydrodipicolinate synthase from Heliobacterium modesticaldum (strain ATCC 51547 / Ice1).